Reading from the N-terminus, the 380-residue chain is MTSPLRIALVAGEASGDILGSGLMRALKARHPDVRFIGVGGPLMEAEGMQSYFPMERLSVMGLVEVLGRLRELLARRKLLVQTLIDEKPDVFIGIDAPDFTLNIELQLRRAGIKTVHYVSPSVWAWRQKRVLKIREGCDLMLTLLPFEARFYEEKGVPVRFVGHPLADTIPLESDRGATRAELGLSVDGPVVALMPGSRGGEVGRLGALFFDAAERLLVERPGLRFVLPCASPQRRAQVEQLLQGRDLPITLLDGRSHVALAACDAVLIASGTATLEALLYKRPMVVAYRMAPLTFWVLKRLVKSPYVSLPNLLAQRLLVPELLQDDATPEALARTLLPLIEDGHAQTEGFDAIHRILRRDASNQAADAVLSLLGLPLSL.

It belongs to the LpxB family.

The catalysed reaction is a lipid X + a UDP-2-N,3-O-bis[(3R)-3-hydroxyacyl]-alpha-D-glucosamine = a lipid A disaccharide + UDP + H(+). Its pathway is bacterial outer membrane biogenesis; LPS lipid A biosynthesis. In terms of biological role, condensation of UDP-2,3-diacylglucosamine and 2,3-diacylglucosamine-1-phosphate to form lipid A disaccharide, a precursor of lipid A, a phosphorylated glycolipid that anchors the lipopolysaccharide to the outer membrane of the cell. The protein is Lipid-A-disaccharide synthase of Pseudomonas syringae pv. tomato (strain ATCC BAA-871 / DC3000).